The chain runs to 176 residues: Inorganic pyrophosphatase (176 aa).

Substrate-binding residues include lysine 30, arginine 44, and tyrosine 56. Positions 66, 71, and 103 each coordinate Mg(2+). Tyrosine 142 serves as a coordination point for substrate.

The protein belongs to the PPase family. As to quaternary structure, homohexamer. Requires Mg(2+) as cofactor.

It is found in the cytoplasm. It carries out the reaction diphosphate + H2O = 2 phosphate + H(+). Its function is as follows. Catalyzes the hydrolysis of inorganic pyrophosphate (PPi) forming two phosphate ions. This is Inorganic pyrophosphatase from Salmonella typhi.